An 82-amino-acid chain; its full sequence is Cobrotoxin-b (82 aa).

The N-terminal stretch at 1–21 (MKTLLLTLLVVTIVCLDLGYT) is a signal peptide. 4 disulfides stabilise this stretch: Cys-24–Cys-44, Cys-38–Cys-61, Cys-63–Cys-74, and Cys-75–Cys-80.

This sequence belongs to the three-finger toxin family. Short-chain subfamily. Type I alpha-neurotoxin sub-subfamily. As to expression, expressed by the venom gland.

It localises to the secreted. Binds to muscle nicotinic acetylcholine receptor (nAChR) and inhibit acetylcholine from binding to the receptor, thereby impairing neuromuscular transmission. Produces peripheral paralysis by blocking neuromuscular transmission at the postsynaptic site. Has a lower toxicity than cobrotoxin. This chain is Cobrotoxin-b, found in Naja atra (Chinese cobra).